We begin with the raw amino-acid sequence, 131 residues long: Holo-[acyl-carrier-protein] synthase (131 aa).

Residues aspartate 8 and glutamate 59 each coordinate Mg(2+).

Belongs to the P-Pant transferase superfamily. AcpS family. The cofactor is Mg(2+).

The protein resides in the cytoplasm. It catalyses the reaction apo-[ACP] + CoA = holo-[ACP] + adenosine 3',5'-bisphosphate + H(+). Its function is as follows. Transfers the 4'-phosphopantetheine moiety from coenzyme A to a Ser of acyl-carrier-protein. This is Holo-[acyl-carrier-protein] synthase from Paramagnetospirillum magneticum (strain ATCC 700264 / AMB-1) (Magnetospirillum magneticum).